The chain runs to 201 residues: Holliday junction resolvase RecU (201 aa).

Mg(2+) is bound by residues threonine 87, aspartate 89, glutamate 102, and glutamine 121.

Belongs to the RecU family. The cofactor is Mg(2+).

It is found in the cytoplasm. The catalysed reaction is Endonucleolytic cleavage at a junction such as a reciprocal single-stranded crossover between two homologous DNA duplexes (Holliday junction).. In terms of biological role, endonuclease that resolves Holliday junction intermediates in genetic recombination. Cleaves mobile four-strand junctions by introducing symmetrical nicks in paired strands. Promotes annealing of linear ssDNA with homologous dsDNA. Required for DNA repair, homologous recombination and chromosome segregation. The sequence is that of Holliday junction resolvase RecU from Listeria welshimeri serovar 6b (strain ATCC 35897 / DSM 20650 / CCUG 15529 / CIP 8149 / NCTC 11857 / SLCC 5334 / V8).